A 441-amino-acid chain; its full sequence is G-protein coupled receptor family C group 5 member C (441 aa).

Residues 1–23 (MAIHKALVMCLGLPLFLFPGAWA) form the signal peptide. The Extracellular segment spans residues 24–50 (QGHVPPGCSQGLNPLYYNLCDRSGAWG). A helical transmembrane segment spans residues 51–71 (IVLEAVAGAGIVTTFVLTIIL). At 72–85 (VASLPFVQDTKKRS) the chain is on the cytoplasmic side. A helical transmembrane segment spans residues 86 to 106 (LLGTQVFFLLGTLGLFCLVFA). The Extracellular portion of the chain corresponds to 107 to 120 (CVVKPDFSTCASRR). The helical transmembrane segment at 121–141 (FLFGVLFAICFSCLAAHVFAL) threads the bilayer. The Cytoplasmic portion of the chain corresponds to 142-155 (NFLARKNHGPRGWV). Residues 156–176 (IFTVALLLTLVEVIINTEWLI) form a helical membrane-spanning segment. At 177 to 208 (ITLVRGSGEGGPQGNSSAGWAVASPCAIANMD) the chain is on the extracellular side. Residue asparagine 191 is glycosylated (N-linked (GlcNAc...) asparagine). A helical transmembrane segment spans residues 209 to 229 (FVMALIYVMLLLLGAFLGAWP). Residues 230-241 (ALCGRYKRWRKH) lie on the Cytoplasmic side of the membrane. Residues 242 to 262 (GVFVLLTTATSVAIWVVWIVM) form a helical membrane-spanning segment. The Extracellular portion of the chain corresponds to 263 to 279 (YTYGNKQHNSPTWDDPT). A helical membrane pass occupies residues 280 to 300 (LAIALAANAWAFVLFYVIPEV). The Cytoplasmic segment spans residues 301–441 (SQVTKSSPEQ…QVFRNPYVWD (141 aa)). Residues serine 344, serine 383, serine 403, and serine 406 each carry the phosphoserine modification. Residues 412 to 441 (DMYSAQSHQAATPPKDGKNSQVFRNPYVWD) form a disordered region. Position 414 is a phosphotyrosine (tyrosine 414). The residue at position 423 (threonine 423) is a Phosphothreonine.

This sequence belongs to the G-protein coupled receptor 3 family. Expression is highest in the periphery, particularly in the stomach, but also in the kidney, liver, pancreas, and prostate. In brain, levels of expression are generally lower than in the periphery, with the exception of cerebellum, spinal cord, and dorsal root ganglia (DRG).

The protein localises to the cell membrane. The protein resides in the cytoplasmic vesicle membrane. Functionally, this retinoic acid-inducible G-protein coupled receptor provide evidence for a possible interaction between retinoid and G-protein signaling pathways. The polypeptide is G-protein coupled receptor family C group 5 member C (GPRC5C) (Homo sapiens (Human)).